Consider the following 428-residue polypeptide: Probable glucose-6-phosphate isomerase (428 aa).

Catalysis depends on Glu-269, which acts as the Proton donor. Residues His-290 and Lys-401 contribute to the active site.

Belongs to the GPI family.

The protein resides in the cytoplasm. The catalysed reaction is alpha-D-glucose 6-phosphate = beta-D-fructose 6-phosphate. Its pathway is carbohydrate biosynthesis; gluconeogenesis. It participates in carbohydrate degradation; glycolysis; D-glyceraldehyde 3-phosphate and glycerone phosphate from D-glucose: step 2/4. Its function is as follows. Catalyzes the reversible isomerization of glucose-6-phosphate to fructose-6-phosphate. The chain is Probable glucose-6-phosphate isomerase from Natronomonas pharaonis (strain ATCC 35678 / DSM 2160 / CIP 103997 / JCM 8858 / NBRC 14720 / NCIMB 2260 / Gabara) (Halobacterium pharaonis).